An 82-amino-acid chain; its full sequence is Small ribosomal subunit protein bS20 (82 aa).

The protein belongs to the bacterial ribosomal protein bS20 family.

In terms of biological role, binds directly to 16S ribosomal RNA. In Lysinibacillus sphaericus (strain C3-41), this protein is Small ribosomal subunit protein bS20.